A 328-amino-acid polypeptide reads, in one-letter code: Peroxidase 25 (328 aa).

Positions 1-26 are cleaved as a signal peptide; that stretch reads MGVYLGKYCYIMIIMLVLVLGKEVRS. Cystine bridges form between Cys-38–Cys-114, Cys-71–Cys-76, Cys-120–Cys-324, and Cys-198–Cys-230. His-69 serves as the catalytic Proton acceptor. 5 residues coordinate Ca(2+): Asp-70, Val-73, Gly-75, Asp-77, and Ser-79. Pro-161 contacts substrate. His-191 is a binding site for heme b. Thr-192 contacts Ca(2+). A glycan (N-linked (GlcNAc...) asparagine) is linked at Asn-207. Ca(2+) is bound by residues Asp-243, Ser-246, and Asp-251.

It belongs to the peroxidase family. Classical plant (class III) peroxidase subfamily. Heme b serves as cofactor. It depends on Ca(2+) as a cofactor.

It localises to the secreted. It catalyses the reaction 2 a phenolic donor + H2O2 = 2 a phenolic radical donor + 2 H2O. In terms of biological role, removal of H(2)O(2), oxidation of toxic reductants, biosynthesis and degradation of lignin, suberization, auxin catabolism, response to environmental stresses such as wounding, pathogen attack and oxidative stress. These functions might be dependent on each isozyme/isoform in each plant tissue. The polypeptide is Peroxidase 25 (PER25) (Arabidopsis thaliana (Mouse-ear cress)).